The sequence spans 142 residues: Endoribonuclease YbeY (142 aa).

Zn(2+) contacts are provided by histidine 107, histidine 111, and aspartate 117.

This sequence belongs to the endoribonuclease YbeY family. Zn(2+) is required as a cofactor.

Its subcellular location is the cytoplasm. Single strand-specific metallo-endoribonuclease involved in late-stage 70S ribosome quality control and in maturation of the 3' terminus of the 16S rRNA. This Chlorobium phaeobacteroides (strain DSM 266 / SMG 266 / 2430) protein is Endoribonuclease YbeY.